The following is a 477-amino-acid chain: Cytochrome P450 716A1 (477 aa).

The chain crosses the membrane as a helical span at residues 2–22; it reads YMAIMIILFLSSILLSLLLLL. Cys-424 contributes to the heme binding site.

This sequence belongs to the cytochrome P450 family. Requires heme as cofactor.

It is found in the membrane. Its function is as follows. Possesses triterpene oxidizing activity. Catalyzes the C28 hydroxylation of alpha-amyrin, beta-amyrin, and lupeol, producing uvaol, erythrodiol, and betulin, respectively. Catalyzes the C28 carboxylation of alpha- and beta-amyrin. The chain is Cytochrome P450 716A1 from Arabidopsis thaliana (Mouse-ear cress).